The chain runs to 127 residues: Small ribosomal subunit protein uS11 (127 aa).

The protein belongs to the universal ribosomal protein uS11 family. Part of the 30S ribosomal subunit. Interacts with proteins S7 and S18. Binds to IF-3.

Its function is as follows. Located on the platform of the 30S subunit, it bridges several disparate RNA helices of the 16S rRNA. Forms part of the Shine-Dalgarno cleft in the 70S ribosome. This Streptococcus suis (strain 98HAH33) protein is Small ribosomal subunit protein uS11.